The chain runs to 61 residues: Short neurotoxin 2 (61 aa).

4 disulfides stabilise this stretch: Cys3-Cys23, Cys17-Cys40, Cys42-Cys53, and Cys54-Cys59.

This sequence belongs to the three-finger toxin family. Short-chain subfamily. Type I alpha-neurotoxin sub-subfamily. As to expression, expressed by the venom gland.

It localises to the secreted. Binds to muscle nicotinic acetylcholine receptor (nAChR) and inhibit acetylcholine from binding to the receptor, thereby impairing neuromuscular transmission. This Hemachatus haemachatus (Rinkhals) protein is Short neurotoxin 2.